We begin with the raw amino-acid sequence, 133 residues long: S-adenosylmethionine decarboxylase proenzyme (133 aa).

Serine 64 serves as the catalytic Schiff-base intermediate with substrate; via pyruvic acid. Serine 64 carries the pyruvic acid (Ser); by autocatalysis modification. The active-site Proton acceptor; for processing activity is histidine 69. Cysteine 84 (proton donor; for catalytic activity) is an active-site residue.

It belongs to the prokaryotic AdoMetDC family. Type 1 subfamily. As to quaternary structure, heterotetramer of two alpha and two beta chains arranged as a dimer of alpha/beta heterodimers. Pyruvate serves as cofactor. Is synthesized initially as an inactive proenzyme. Formation of the active enzyme involves a self-maturation process in which the active site pyruvoyl group is generated from an internal serine residue via an autocatalytic post-translational modification. Two non-identical subunits are generated from the proenzyme in this reaction, and the pyruvate is formed at the N-terminus of the alpha chain, which is derived from the carboxyl end of the proenzyme. The post-translation cleavage follows an unusual pathway, termed non-hydrolytic serinolysis, in which the side chain hydroxyl group of the serine supplies its oxygen atom to form the C-terminus of the beta chain, while the remainder of the serine residue undergoes an oxidative deamination to produce ammonia and the pyruvoyl group blocking the N-terminus of the alpha chain.

It catalyses the reaction S-adenosyl-L-methionine + H(+) = S-adenosyl 3-(methylsulfanyl)propylamine + CO2. Its pathway is amine and polyamine biosynthesis; S-adenosylmethioninamine biosynthesis; S-adenosylmethioninamine from S-adenosyl-L-methionine: step 1/1. In terms of biological role, catalyzes the decarboxylation of S-adenosylmethionine to S-adenosylmethioninamine (dcAdoMet), the propylamine donor required for the synthesis of the polyamines spermine and spermidine from the diamine putrescine. The polypeptide is S-adenosylmethionine decarboxylase proenzyme (Persephonella marina (strain DSM 14350 / EX-H1)).